We begin with the raw amino-acid sequence, 278 residues long: Putative non-heme haloperoxidase (278 aa).

The 217-residue stretch at 24–240 (PLVFLHGLSV…STAKITNASF (217 aa)) folds into the AB hydrolase-1 domain. Catalysis depends on residues Ser97 and Asp221.

The protein belongs to the AB hydrolase superfamily.

The protein is Putative non-heme haloperoxidase (59.2) of Mycobacterium (Mycobacteriophage D29).